Here is a 293-residue protein sequence, read N- to C-terminus: 4-diphosphocytidyl-2-C-methyl-D-erythritol kinase (293 aa).

Residue Lys16 is part of the active site. 99–109 provides a ligand contact to ATP; sequence PMGAGLGGGSS. Asp141 is a catalytic residue.

It belongs to the GHMP kinase family. IspE subfamily.

It carries out the reaction 4-CDP-2-C-methyl-D-erythritol + ATP = 4-CDP-2-C-methyl-D-erythritol 2-phosphate + ADP + H(+). The protein operates within isoprenoid biosynthesis; isopentenyl diphosphate biosynthesis via DXP pathway; isopentenyl diphosphate from 1-deoxy-D-xylulose 5-phosphate: step 3/6. In terms of biological role, catalyzes the phosphorylation of the position 2 hydroxy group of 4-diphosphocytidyl-2C-methyl-D-erythritol. The chain is 4-diphosphocytidyl-2-C-methyl-D-erythritol kinase from Burkholderia ambifaria (strain MC40-6).